A 383-amino-acid chain; its full sequence is Mannitol-1-phosphate 5-dehydrogenase (383 aa).

3–14 contacts NAD(+); it reads ALHFGAGNIGRG.

The protein belongs to the mannitol dehydrogenase family.

The catalysed reaction is D-mannitol 1-phosphate + NAD(+) = beta-D-fructose 6-phosphate + NADH + H(+). This Serratia proteamaculans (strain 568) protein is Mannitol-1-phosphate 5-dehydrogenase.